We begin with the raw amino-acid sequence, 36 residues long: Potassium channel toxin alpha-KTx 16.5 (36 aa).

3 disulfide bridges follow: Cys7-Cys28, Cys13-Cys33, and Cys17-Cys35. The tract at residues Gly26–Cys33 is interaction with Ca(2+)-activated K(+) channels.

It belongs to the short scorpion toxin superfamily. Potassium channel inhibitor family. Alpha-KTx 16 subfamily. As to expression, expressed by the venom gland.

The protein resides in the secreted. Its function is as follows. Augments responses to direct muscle stimulation probably by blocking calcium-activated potassium channels. The sequence is that of Potassium channel toxin alpha-KTx 16.5 from Leiurus hebraeus (Hebrew deathstalker scorpion).